Here is a 144-residue protein sequence, read N- to C-terminus: Small ribosomal subunit protein bS16 (144 aa).

Residues 115-144 (NEPVAEAVTPKKKAKKDDAAAESTEAEAAE) form a disordered region.

The protein belongs to the bacterial ribosomal protein bS16 family.

This Nocardia farcinica (strain IFM 10152) protein is Small ribosomal subunit protein bS16.